An 87-amino-acid polypeptide reads, in one-letter code: Apolipoprotein C-I (87 aa).

The first 26 residues, Met1–Ala26, serve as a signal peptide directing secretion.

This sequence belongs to the apolipoprotein C1 family.

Its subcellular location is the secreted. Functionally, inhibitor of lipoprotein binding to the low density lipoprotein (LDL) receptor, LDL receptor-related protein, and very low density lipoprotein (VLDL) receptor. Associates with high density lipoproteins (HDL) and the triacylglycerol-rich lipoproteins in the plasma and makes up about 10% of the protein of the VLDL and 2% of that of HDL. Appears to interfere directly with fatty acid uptake and is also the major plasma inhibitor of cholesteryl ester transfer protein (CETP). Binds free fatty acids and reduces their intracellular esterification. Modulates the interaction of APOE with beta-migrating VLDL and inhibits binding of beta-VLDL to the LDL receptor-related protein. The chain is Apolipoprotein C-I (APOC1) from Pteropus alecto (Black flying fox).